Here is a 98-residue protein sequence, read N- to C-terminus: Integration host factor subunit alpha (98 aa).

This sequence belongs to the bacterial histone-like protein family. Heterodimer of an alpha and a beta chain.

Its function is as follows. This protein is one of the two subunits of integration host factor, a specific DNA-binding protein that functions in genetic recombination as well as in transcriptional and translational control. This is Integration host factor subunit alpha from Marinomonas sp. (strain MWYL1).